Consider the following 151-residue polypeptide: MKRNNKSAIALIALSLLALSSGAAFAGHHWGNNDGMWQQGGSPLTTEQQATAQKIYDDYYTQTSALRQQLISKRYEYNALLTASSPDTAKINAVAKEMESLGQKLDEQRVKRDVAMAQAGIPRGAGVGYGGCGGYGGGYHRGGGHMGMGNW.

A signal peptide spans 1–26; it reads MKRNNKSAIALIALSLLALSSGAAFA.

The protein belongs to the ZraP family.

The protein localises to the periplasm. In terms of biological role, part of the Zra signaling pathway, an envelope stress response (ESR) system composed of the periplasmic accessory protein ZraP, the histidine kinase ZraS and the transcriptional regulator ZraR. The ZraPSR system contributes to antibiotic resistance and is important for membrane integrity in the presence of membrane-targeting biocides. ZraP acts as a modulator which has both a regulatory and a chaperone function. The zinc-bound form of ZraP modulates the response of the ZraPSR system by inhibiting the expression of the zra genes, probably by interacting with ZraS. The sequence is that of Signaling pathway modulator ZraP (zraP) from Salmonella typhi.